The primary structure comprises 290 residues: 4-diphosphocytidyl-2-C-methyl-D-erythritol kinase (290 aa).

Lysine 10 is a catalytic residue. 95-105 serves as a coordination point for ATP; the sequence is PVAAGLAGGSS. Aspartate 137 is an active-site residue.

This sequence belongs to the GHMP kinase family. IspE subfamily.

It carries out the reaction 4-CDP-2-C-methyl-D-erythritol + ATP = 4-CDP-2-C-methyl-D-erythritol 2-phosphate + ADP + H(+). It participates in isoprenoid biosynthesis; isopentenyl diphosphate biosynthesis via DXP pathway; isopentenyl diphosphate from 1-deoxy-D-xylulose 5-phosphate: step 3/6. Functionally, catalyzes the phosphorylation of the position 2 hydroxy group of 4-diphosphocytidyl-2C-methyl-D-erythritol. This Geobacillus thermodenitrificans (strain NG80-2) protein is 4-diphosphocytidyl-2-C-methyl-D-erythritol kinase.